Here is a 229-residue protein sequence, read N- to C-terminus: 2-C-methyl-D-erythritol 4-phosphate cytidylyltransferase (229 aa).

The protein belongs to the IspD/TarI cytidylyltransferase family. IspD subfamily.

It catalyses the reaction 2-C-methyl-D-erythritol 4-phosphate + CTP + H(+) = 4-CDP-2-C-methyl-D-erythritol + diphosphate. It functions in the pathway isoprenoid biosynthesis; isopentenyl diphosphate biosynthesis via DXP pathway; isopentenyl diphosphate from 1-deoxy-D-xylulose 5-phosphate: step 2/6. Functionally, catalyzes the formation of 4-diphosphocytidyl-2-C-methyl-D-erythritol from CTP and 2-C-methyl-D-erythritol 4-phosphate (MEP). The sequence is that of 2-C-methyl-D-erythritol 4-phosphate cytidylyltransferase from Neisseria gonorrhoeae (strain ATCC 700825 / FA 1090).